The sequence spans 123 residues: Beta-defensin 126 (123 aa).

Residues 1 to 20 (MKSLLFTLAVFMLLAQLVSG) form the signal peptide. The tract at residues 21-63 (NLYVKRCLNDIGICKKTCKPEEVRSEHGWVMCGKRKACCVPAD) is in vitro binds to LPS, mediates antimicrobial activity and inhibits LPS-mediated inflammation. 3 cysteine pairs are disulfide-bonded: cysteine 27–cysteine 58, cysteine 34–cysteine 52, and cysteine 38–cysteine 59.

This sequence belongs to the beta-defensin family. In terms of assembly, homodimer or homooligomer; disulfide-linked. O-glycosylated; glycans contain sialic acids alpha(2,3)-linked to galactose and N-acetylgalactosamine. The C-terminal O-glycosylation contributes substantially to the sperm glyocalyx. As to expression, high-level and epididymis-specific expression. Detected in epithelial cells lining the efferent ductules, initial segment, and cauda regions of the epididymis, but not on spermatozoa.

Its subcellular location is the secreted. Highly glycosylated atypical beta-defensin involved in several aspects of sperm function. Facilitates sperm transport in the female reproductive tract and contributes to sperm protection against immunodetection; both functions are probably implicating the negative surface charge provided by its O-linked oligosaccharides in the sperm glycocalyx. Involved in binding of sperm to oviductal epithelial cells to form a sperm reservoir until ovulation. Release from the sperm surface during capacitation and ovaluation by an elevation of oviductal fluid pH is unmasking other surface components and allows sperm to penetrate the cumulus matrix and bind to the zona pellucida of the oocyte. In vitro has antimicrobial activity and may inhibit LPS-mediated inflammation. The polypeptide is Beta-defensin 126 (DEFB126) (Macaca fascicularis (Crab-eating macaque)).